A 198-amino-acid polypeptide reads, in one-letter code: Na(+)-translocating NADH-quinone reductase subunit E (198 aa).

6 helical membrane-spanning segments follow: residues 11 to 31, 39 to 59, 77 to 97, 110 to 130, 140 to 160, and 176 to 196; these read SIFI…FLAV, FGLG…NNLV, FLNF…LEMI, GIFL…SFMV, VVYG…LAGI, and LGIT…FSGV.

This sequence belongs to the NqrDE/RnfAE family. In terms of assembly, composed of six subunits; NqrA, NqrB, NqrC, NqrD, NqrE and NqrF.

The protein localises to the cell inner membrane. It carries out the reaction a ubiquinone + n Na(+)(in) + NADH + H(+) = a ubiquinol + n Na(+)(out) + NAD(+). Functionally, NQR complex catalyzes the reduction of ubiquinone-1 to ubiquinol by two successive reactions, coupled with the transport of Na(+) ions from the cytoplasm to the periplasm. NqrA to NqrE are probably involved in the second step, the conversion of ubisemiquinone to ubiquinol. The sequence is that of Na(+)-translocating NADH-quinone reductase subunit E from Vibrio vulnificus (strain CMCP6).